We begin with the raw amino-acid sequence, 58 residues long: Sperm histone P2b (58 aa).

A disordered region spans residues 20–41; it reads LRRRRYRSSRRRRRRPCRRRRH.

It belongs to the protamine P2 family. Testis.

The protein localises to the nucleus. The protein resides in the chromosome. In terms of biological role, protamines substitute for histones in the chromatin of sperm during the haploid phase of spermatogenesis. They compact sperm DNA into a highly condensed, stable and inactive complex. The polypeptide is Sperm histone P2b (Equus caballus (Horse)).